A 466-amino-acid polypeptide reads, in one-letter code: MTEKLWQGRFDQPTNRQVEDYTASIHFDNRLYRYDIEGSIAHCRMLAQCKIISHDDASLIVQGLGEIRRELERGKLHLGSSNEDIHMAIEQELMRKIGEVGGKLHTARSRNDQVALDVRLYMRDTLLQCRGLILQTQKVLVSCAEENLGVVMPGFTHLQHAQPILLSHHLMAYYEMLKRDDERFEQCFHRTNVLPLGSAALAGTTFPIDMEWTAKYLNFPRVTSNSIDAVSDRDYLIEFGAASAMLMMHVSRLAEELILWSSTEFDFIEISDAFCTGSSIMPQKKNPDVPELMRGKTGRVYGNLMALLTLTKALPLAYNRDLQEDKEPVFDTADTIISTLRLLSRLIPEIRFHRERMGEMAIQGFTLATDLADYLVKKGVPFRKAHHIVGQIVQYCLKNRKQLHDCTVEELKTFHKTIDQDVFPFLEVAGAIDQRVSIGGTATTRVVEAIEKARAELDALEQSLSS.

Belongs to the lyase 1 family. Argininosuccinate lyase subfamily.

The protein localises to the cytoplasm. The enzyme catalyses 2-(N(omega)-L-arginino)succinate = fumarate + L-arginine. It participates in amino-acid biosynthesis; L-arginine biosynthesis; L-arginine from L-ornithine and carbamoyl phosphate: step 3/3. The chain is Argininosuccinate lyase from Syntrophobacter fumaroxidans (strain DSM 10017 / MPOB).